The primary structure comprises 962 residues: Protocadherin gamma-A4 (962 aa).

The interval 1 to 24 is disordered; the sequence is MHFILDPEDPGAPQASTEGKPKHR. Positions 1 to 59 are cleaved as a signal peptide; that stretch reads MHFILDPEDPGAPQASTEGKPKHRRLRGGVVMAAPPARPDHTRLLQICLLLGVLVEIRA. Cadherin domains are found at residues 60–164, 165–273, 274–378, 379–483, 484–598, and 601–713; these read EQIL…PPSF, GTEQ…APVF, TQPE…APEV, TVTS…PPTF, PHAS…YPTF, and DGST…KPSA. Over 60–723 the chain is Extracellular; the sequence is EQILYSVFEE…DPDDSGLTLY (664 aa). Residues N450 and N576 are each glycosylated (N-linked (GlcNAc...) asparagine). The helical transmembrane segment at 724 to 744 threads the bilayer; it reads LVVAVAAVSCVFLAFVTVLLA. Residues 745–962 are Cytoplasmic-facing; that stretch reads LKLRRWHKSR…KKKSGKKEKK (218 aa). 2 disordered regions span residues 832–871 and 932–962; these read KGDP…WPNN and ATLT…KEKK. The segment covering 836–871 has biased composition (polar residues); sequence NLQQAPPNTDWRFSQAQRPGTSGSQNGDDTGTWPNN. Positions 952 to 962 are enriched in basic residues; that stretch reads NKKKSGKKEKK.

Its subcellular location is the cell membrane. In terms of biological role, potential calcium-dependent cell-adhesion protein. May be involved in the establishment and maintenance of specific neuronal connections in the brain. The chain is Protocadherin gamma-A4 (PCDHGA4) from Homo sapiens (Human).